Here is a 304-residue protein sequence, read N- to C-terminus: Bifunctional protein FolD 3 (304 aa).

NADP(+)-binding positions include 172-174, Ser-197, and Ile-238; that span reads GRS.

It belongs to the tetrahydrofolate dehydrogenase/cyclohydrolase family. In terms of assembly, homodimer.

The enzyme catalyses (6R)-5,10-methylene-5,6,7,8-tetrahydrofolate + NADP(+) = (6R)-5,10-methenyltetrahydrofolate + NADPH. It carries out the reaction (6R)-5,10-methenyltetrahydrofolate + H2O = (6R)-10-formyltetrahydrofolate + H(+). The protein operates within one-carbon metabolism; tetrahydrofolate interconversion. In terms of biological role, catalyzes the oxidation of 5,10-methylenetetrahydrofolate to 5,10-methenyltetrahydrofolate and then the hydrolysis of 5,10-methenyltetrahydrofolate to 10-formyltetrahydrofolate. The protein is Bifunctional protein FolD 3 of Rhizorhabdus wittichii (strain DSM 6014 / CCUG 31198 / JCM 15750 / NBRC 105917 / EY 4224 / RW1) (Sphingomonas wittichii).